Consider the following 631-residue polypeptide: Probable potassium transport system protein Kup 1 (631 aa).

A run of 12 helical transmembrane segments spans residues 17-37 (LALG…LYAL), 55-75 (LSLI…MIIF), 101-121 (PLFY…GMLT), 140-160 (LYPY…SLQA), 166-186 (IGYL…ILGI), 217-237 (FLLG…ADIG), 249-269 (FFIA…NLIV), 277-297 (PFFM…ATVA), 338-358 (IYVP…CLAF), 370-390 (IAVN…AVSI), 395-415 (TFNV…FLGA), and 420-440 (FITG…IMYS).

This sequence belongs to the HAK/KUP transporter (TC 2.A.72) family.

Its subcellular location is the cell inner membrane. It carries out the reaction K(+)(in) + H(+)(in) = K(+)(out) + H(+)(out). Functionally, transport of potassium into the cell. Likely operates as a K(+):H(+) symporter. The polypeptide is Probable potassium transport system protein Kup 1 (Legionella pneumophila (strain Corby)).